The primary structure comprises 712 residues: Glucans biosynthesis glucosyltransferase H (712 aa).

6 helical membrane passes run 57 to 77 (LAIM…MYQV), 89 to 109 (IVLA…VSAL), 408 to 428 (GIGS…GILI), 462 to 482 (FAGT…LVVI), 552 to 572 (YAAP…VSWP), and 573 to 593 (LLLW…VALL).

The protein belongs to the glycosyltransferase 2 family. OpgH subfamily.

The protein localises to the cell inner membrane. The protein operates within glycan metabolism; osmoregulated periplasmic glucan (OPG) biosynthesis. Functionally, involved in the biosynthesis of osmoregulated periplasmic glucans (OPGs). The polypeptide is Glucans biosynthesis glucosyltransferase H (Rhodopseudomonas palustris (strain BisA53)).